Consider the following 947-residue polypeptide: Protein translocase subunit SecA (947 aa).

Residues glutamine 85, 103–107, and aspartate 514 contribute to the ATP site; that span reads GEGKT. A disordered region spans residues 864–947; the sequence is AAPSLDKGAQ…QAKGGRRRKK (84 aa). Residues 884-900 show a composition bias toward basic and acidic residues; that stretch reads PEIRAKGLDAPQRRDLH. A compositionally biased stretch (basic residues) spans 934-947; that stretch reads ERRKQAKGGRRRKK.

It belongs to the SecA family. Monomer and homodimer. Part of the essential Sec protein translocation apparatus which comprises SecA, SecYEG and auxiliary proteins SecDF. Other proteins may also be involved.

Its subcellular location is the cell membrane. The protein resides in the cytoplasm. The enzyme catalyses ATP + H2O + cellular proteinSide 1 = ADP + phosphate + cellular proteinSide 2.. Functionally, part of the Sec protein translocase complex. Interacts with the SecYEG preprotein conducting channel. Has a central role in coupling the hydrolysis of ATP to the transfer of proteins into and across the cell membrane, serving as an ATP-driven molecular motor driving the stepwise translocation of polypeptide chains across the membrane. The polypeptide is Protein translocase subunit SecA (Streptomyces lividans).